Reading from the N-terminus, the 95-residue chain is NELL2-interacting cell ontogeny regulator 1 (95 aa).

The first 34 residues, 1–34 (MAPPPACRSPMSPPPPPLLLLLLSLALLGARARA), serve as a signal peptide directing secretion.

Belongs to the NICOL family. In terms of assembly, interacts with NELL2; triggers epididymal differentiation. Interacts with cell surface receptor TFRC; the interaction mediates uptake of NICOL1 into fibroblasts. As to expression, detected in the brain (at protein level). Also expressed at low levels in the kidney, primarily in tubular epithelial cells.

Its subcellular location is the secreted. The protein localises to the cytoplasm. It localises to the perinuclear region. In terms of biological role, mRNA-binding protein which interacts with a range of target mRNAs including SERPINE1, ACTA2, CCN2 and COL4A1 and may promote extracellular matrix production. Binds to the 3'-UTR of SERPINE1 mRNA and stabilizes the mRNA, possibly by competing for binding with SERBP1 and preventing SERBP1-mediated mRNA degradation. Also binds to the 3'-UTR of ACTA2. Testis-derived lumicrine factor that triggers epididymal differentiation and sperm maturation. The protein is NELL2-interacting cell ontogeny regulator 1 of Homo sapiens (Human).